The chain runs to 375 residues: Chaperone protein DnaJ (375 aa).

The region spanning D5–G70 is the J domain. The CR-type zinc finger occupies G130–S208. The Zn(2+) site is built by C143, C146, C160, C163, C182, C185, C196, and C199. 4 CXXCXGXG motif repeats span residues C143–G150, C160–G167, C182–G189, and C196–G203.

This sequence belongs to the DnaJ family. As to quaternary structure, homodimer. Zn(2+) is required as a cofactor.

Its subcellular location is the cytoplasm. Participates actively in the response to hyperosmotic and heat shock by preventing the aggregation of stress-denatured proteins and by disaggregating proteins, also in an autonomous, DnaK-independent fashion. Unfolded proteins bind initially to DnaJ; upon interaction with the DnaJ-bound protein, DnaK hydrolyzes its bound ATP, resulting in the formation of a stable complex. GrpE releases ADP from DnaK; ATP binding to DnaK triggers the release of the substrate protein, thus completing the reaction cycle. Several rounds of ATP-dependent interactions between DnaJ, DnaK and GrpE are required for fully efficient folding. Also involved, together with DnaK and GrpE, in the DNA replication of plasmids through activation of initiation proteins. This Blochmanniella pennsylvanica (strain BPEN) protein is Chaperone protein DnaJ.